The chain runs to 160 residues: Protransforming growth factor alpha (160 aa).

The N-terminal stretch at 1–23 is a signal peptide; that stretch reads MVPSAGQLALFALGIVLAACQAL. A propeptide spans 24–39 (removed in mature form); the sequence is ENSTSPLSADPPVAAA. Over 24 to 98 the chain is Extracellular; sequence ENSTSPLSAD…AVVAASQKKQ (75 aa). A glycan (N-linked (GlcNAc...) asparagine) is linked at Asn-25. One can recognise an EGF-like domain in the interval 43–83; sequence HFNDCPDSHTQFCFHGTCRFLVQEDKPACVCHSGYVGARCE. 3 disulfides stabilise this stretch: Cys-47/Cys-60, Cys-55/Cys-71, and Cys-73/Cys-82. Residues 90–160 constitute a propeptide, removed in mature form; the sequence is VVAASQKKQA…TACCHSETVV (71 aa). A helical membrane pass occupies residues 99-124; sequence AITALVVVSIVALAVLIITCVLIHCC. The Cytoplasmic segment spans residues 125-160; that stretch reads QVRKHCEWCRALICRHEKPSALLKGRTACCHSETVV. S-palmitoyl cysteine attachment occurs at residues Cys-153 and Cys-154.

In terms of assembly, interacts with the PDZ domains of MAGI3, SDCBP and SNTA1. The interaction with SDCBP, is required for the targeting to the cell surface. In the endoplasmic reticulum, in its immature form (i.e. with a prosegment and lacking full N-glycosylation), interacts with CNIH. In the Golgi apparatus, may form a complex with CNIH and GORASP2. Interacts (via cytoplasmic C-terminal domain) with NKD2. Isoform 1, isoform 3 and isoform 4 are expressed in keratinocytes and tumor-derived cell lines.

Its subcellular location is the secreted. It localises to the extracellular space. The protein resides in the cell membrane. In terms of biological role, TGF alpha is a mitogenic polypeptide that is able to bind to the EGF receptor/EGFR and to act synergistically with TGF beta to promote anchorage-independent cell proliferation in soft agar. This Homo sapiens (Human) protein is Protransforming growth factor alpha (TGFA).